A 1039-amino-acid chain; its full sequence is Multidrug resistance protein MdtB (1039 aa).

A run of 11 helical transmembrane segments spans residues 15-37 (LFIMRPVATTLLMVAILLAGIIG), 345-362 (FELMMAIALVVMIIYLFL), 367-389 (ATIIPGVAVPLSLIGTFAVMVFL), 396-418 (LTLMALTIATGFVVDDAIVVIEN), 438-460 (GEIGFTIISLTFSLIAVLIPLLF), 472-494 (FAITLAVAILISAVVSLTLTPMM), 535-557 (HPWLTLSVALSTLLLSVLLWVFI), 866-888 (VWLIVAAVVAMYIVLGILYESFI), 908-930 (LMIAGSELDVIAIIGIILLIGIV), 967-989 (ILMTTLAALLGALPLMLSTGVGA), and 999-1021 (MVGGLIVSQVLTLFTTPVIYLLF).

Belongs to the resistance-nodulation-cell division (RND) (TC 2.A.6) family. MdtB subfamily. As to quaternary structure, part of a tripartite efflux system composed of MdtA, MdtB and MdtC. MdtB forms a heteromultimer with MdtC.

The protein resides in the cell inner membrane. This is Multidrug resistance protein MdtB from Shigella flexneri.